We begin with the raw amino-acid sequence, 133 residues long: Small ribosomal subunit protein uS9 (133 aa).

The disordered stretch occupies residues 94–133 (SADNRKPLKTEGHLSRDPRAKERRKYGLKKARKAPQFSKR). Residues 95-113 (ADNRKPLKTEGHLSRDPRA) are compositionally biased toward basic and acidic residues. Basic residues predominate over residues 114 to 133 (KERRKYGLKKARKAPQFSKR).

Belongs to the universal ribosomal protein uS9 family.

In Synechococcus sp. (strain CC9605), this protein is Small ribosomal subunit protein uS9.